Here is a 128-residue protein sequence, read N- to C-terminus: Gastrotropin (128 aa).

The residue at position 2 (Ala2) is an N-acetylalanine.

Belongs to the calycin superfamily. Fatty-acid binding protein (FABP) family. Predominantly expressed in ileum; also expressed in ovary.

Its subcellular location is the cytoplasm. It is found in the membrane. Binds to bile acids and is involved in enterohepatic bile acid metabolism. Required for efficient apical to basolateral transport of conjugated bile acids in ileal enterocytes. Stimulates gastric acid and pepsinogen secretion. This is Gastrotropin (Fabp6) from Rattus norvegicus (Rat).